The chain runs to 245 residues: Heavy metal-associated isoprenylated plant protein 1 (245 aa).

One can recognise an HMA 1 domain in the interval 28–92 (PVHVVLKIDF…KLQKKSKKKV (65 aa)). A metal cation-binding residues include Cys-39 and Cys-42. Residues 91 to 113 (KVELISPKPKKDTKENNEKKAND) form a disordered region. Residues 99–113 (PKKDTKENNEKKAND) are compositionally biased toward basic and acidic residues. The region spanning 121 to 188 (VTTVVLKVNC…KLKKTVQVVP (68 aa)) is the HMA 2 domain. Residues Cys-132 and Cys-135 each coordinate a metal cation. Cys-242 bears the Cysteine methyl ester mark. Residue Cys-242 is the site of S-farnesyl cysteine attachment. Residues 243-245 (SVM) constitute a propeptide, removed in mature form.

It belongs to the HIPP family.

Heavy-metal-binding protein. In Arabidopsis thaliana (Mouse-ear cress), this protein is Heavy metal-associated isoprenylated plant protein 1.